The chain runs to 275 residues: Polyamine aminopropyltransferase 1 (275 aa).

One can recognise a PABS domain in the interval 2-235 (ELWFTEKQTK…GLWTFTIGSK (234 aa)). Q31 contacts S-methyl-5'-thioadenosine. Residues H62 and D86 each contribute to the spermidine site. Residues E106 and 137-138 (DG) each bind S-methyl-5'-thioadenosine. D155 serves as the catalytic Proton acceptor. 155–158 (DSTE) lines the spermidine pocket. Residue P162 coordinates S-methyl-5'-thioadenosine.

This sequence belongs to the spermidine/spermine synthase family. Homodimer or homotetramer.

Its subcellular location is the cytoplasm. It catalyses the reaction S-adenosyl 3-(methylsulfanyl)propylamine + putrescine = S-methyl-5'-thioadenosine + spermidine + H(+). The protein operates within amine and polyamine biosynthesis; spermidine biosynthesis; spermidine from putrescine: step 1/1. Its function is as follows. Catalyzes the irreversible transfer of a propylamine group from the amino donor S-adenosylmethioninamine (decarboxy-AdoMet) to putrescine (1,4-diaminobutane) to yield spermidine. The polypeptide is Polyamine aminopropyltransferase 1 (Bacillus cereus (strain ATCC 14579 / DSM 31 / CCUG 7414 / JCM 2152 / NBRC 15305 / NCIMB 9373 / NCTC 2599 / NRRL B-3711)).